The following is a 507-amino-acid chain: ATP synthase subunit alpha 2 (507 aa).

Glycine 171 to threonine 178 contributes to the ATP binding site.

Belongs to the ATPase alpha/beta chains family. In terms of assembly, F-type ATPases have 2 components, CF(1) - the catalytic core - and CF(0) - the membrane proton channel. CF(1) has five subunits: alpha(3), beta(3), gamma(1), delta(1), epsilon(1). CF(0) has three main subunits: a(1), b(2) and c(9-12). The alpha and beta chains form an alternating ring which encloses part of the gamma chain. CF(1) is attached to CF(0) by a central stalk formed by the gamma and epsilon chains, while a peripheral stalk is formed by the delta and b chains.

It is found in the cell inner membrane. It catalyses the reaction ATP + H2O + 4 H(+)(in) = ADP + phosphate + 5 H(+)(out). Its function is as follows. Produces ATP from ADP in the presence of a proton gradient across the membrane. The alpha chain is a regulatory subunit. The sequence is that of ATP synthase subunit alpha 2 from Gluconobacter oxydans (strain 621H) (Gluconobacter suboxydans).